A 153-amino-acid chain; its full sequence is Transcriptional repressor NrdR (153 aa).

A zinc finger lies at 3–34; the sequence is CPSCHHSGTRVLESRPVEEGRSIRRRRECEQC. In terms of domain architecture, ATP-cone spans 49–139; it reads LIVVKKEGTR…VYRQFKDINV (91 aa).

This sequence belongs to the NrdR family. It depends on Zn(2+) as a cofactor.

In terms of biological role, negatively regulates transcription of bacterial ribonucleotide reductase nrd genes and operons by binding to NrdR-boxes. This Geobacillus kaustophilus (strain HTA426) protein is Transcriptional repressor NrdR.